The primary structure comprises 506 residues: Histone acetyltransferase esa-1 (506 aa).

Positions methionine 1–aspartate 24 are disordered. The region spanning isoleucine 26–aspartate 78 is the Tudor-knot domain. Positions aspartate 82 to asparagine 215 are disordered. The segment covering asparagine 87 to threonine 98 has biased composition (basic and acidic residues). Over residues glutamine 109 to serine 120 the composition is skewed to basic residues. A compositionally biased stretch (basic and acidic residues) spans glycine 167–glutamate 178. An MYST-type HAT domain is found at serine 220–proline 494. The segment at isoleucine 253–leucine 278 adopts a C2HC MYST-type zinc-finger fold. An ESA1-RPD3 motif motif is present at residues arginine 303–tyrosine 324. Lysine 320 carries the N6-acetyllysine; by autocatalysis modification. Residues alanine 361–threonine 365 and glutamine 370–arginine 376 each bind acetyl-CoA. The Proton donor/acceptor role is filled by glutamate 396. Serine 400 is an acetyl-CoA binding site.

Belongs to the MYST (SAS/MOZ) family. As to quaternary structure, component of the NuA4 histone acetyltransferase complex. Autoacetylation at Lys-320 is required for proper function.

It localises to the nucleus. The protein resides in the chromosome. It catalyses the reaction L-lysyl-[histone] + acetyl-CoA = N(6)-acetyl-L-lysyl-[histone] + CoA + H(+). It carries out the reaction L-lysyl-[protein] + acetyl-CoA = N(6)-acetyl-L-lysyl-[protein] + CoA + H(+). The catalysed reaction is 2-hydroxyisobutanoyl-CoA + L-lysyl-[protein] = N(6)-(2-hydroxyisobutanoyl)-L-lysyl-[protein] + CoA + H(+). The enzyme catalyses (2E)-butenoyl-CoA + L-lysyl-[protein] = N(6)-(2E)-butenoyl-L-lysyl-[protein] + CoA + H(+). In terms of biological role, catalytic component of the NuA4 histone acetyltransferase (HAT) complex which is involved in epigenetic transcriptional activation of selected genes principally by acetylation of nucleosomal histones H4, H3, H2B, H2A and H2A variant H2A.Z. Acetylates histone H4 to form H4K5ac, H4K8ac, H4K12ac and H4K16ac, histone H3 to form H3K14ac, and histone H2A to form H2AK4ac and H2AK7ac. The NuA4 complex is involved in the DNA damage response and is required for chromosome segregation. The NuA4 complex plays a direct role in repair of DNA double-strand breaks (DSBs) through homologous recombination. Recruitment to promoters depends on H3K4me. Also acetylates non-histone proteins. In addition to protein acetyltransferase, can use different acyl-CoA substrates, such as 2-hydroxyisobutanoyl-CoA (2-hydroxyisobutyryl-CoA) or (2E)-butenoyl-CoA (crotonyl-CoA), and is able to mediate protein 2-hydroxyisobutyrylation and crotonylation, respectively. The chain is Histone acetyltransferase esa-1 (esa-1) from Neurospora crassa (strain ATCC 24698 / 74-OR23-1A / CBS 708.71 / DSM 1257 / FGSC 987).